The sequence spans 306 residues: RNA pseudouridylate synthase domain-containing protein 1 (306 aa).

M1 is subject to N-acetylmethionine. The active site involves D67. Positions 255–290 (RTDPDPDPMSGGPRPCSPSTPQPRPGRPPPETEAQR) are disordered. A compositionally biased stretch (pro residues) spans 269–285 (PCSPSTPQPRPGRPPPE).

The protein belongs to the pseudouridine synthase RluA family.

The protein is RNA pseudouridylate synthase domain-containing protein 1 (Rpusd1) of Mus musculus (Mouse).